Consider the following 126-residue polypeptide: UPF0047 protein AF_2050 (126 aa).

This sequence belongs to the UPF0047 family.

This is UPF0047 protein AF_2050 from Archaeoglobus fulgidus (strain ATCC 49558 / DSM 4304 / JCM 9628 / NBRC 100126 / VC-16).